A 607-amino-acid chain; its full sequence is Elongation factor 4 (607 aa).

Positions 11 to 193 (SKIRNFSIIA…QIVEKVPAPT (183 aa)) constitute a tr-type G domain. GTP is bound by residues 23 to 28 (DHGKST) and 140 to 143 (NKID).

The protein belongs to the TRAFAC class translation factor GTPase superfamily. Classic translation factor GTPase family. LepA subfamily.

The protein localises to the cell membrane. The catalysed reaction is GTP + H2O = GDP + phosphate + H(+). Functionally, required for accurate and efficient protein synthesis under certain stress conditions. May act as a fidelity factor of the translation reaction, by catalyzing a one-codon backward translocation of tRNAs on improperly translocated ribosomes. Back-translocation proceeds from a post-translocation (POST) complex to a pre-translocation (PRE) complex, thus giving elongation factor G a second chance to translocate the tRNAs correctly. Binds to ribosomes in a GTP-dependent manner. In Bacillus cereus (strain ATCC 10987 / NRS 248), this protein is Elongation factor 4.